A 427-amino-acid polypeptide reads, in one-letter code: MFFTCGPNEAMVVSGFCRSPPVMVAGGRVFVLPCIQQIQRISLNTLTLNVKSEKVYTRHGVPISVTGIAQVKIQGQNKEMLAAACQMFLGKTEAEIAHIALETLEGHQRAIMAHMTVEEIYKDRQKFSEQVFKVASSDLVNMGISVVSYTLKDIHDDQDYLHSLGKARTAQVQKDARIGEAEAKRDAGIREAKAKQEKVSAQYLSEIEMAKAQRDYELKKAAYDIEVNTRRAQADLAYQLQVAKTKQQIEEQRVQVQVVERAQQVAVQEQEIARREKELEARVRKPAEAERYKLERLAAAEKSQLIMQAEAEAESVRMRGEAEAFAIGARARAEAEQMAKKAEAFQLYQEAAQLDMLLEKLPQVAEEISGPLTSAKKITLVSSGSGTMGAAKVTGEVLDILSRLPESVERLTGVSISQVNHKPLRTA.

Residues Ser-19, Ser-163, and Ser-385 each carry the phosphoserine modification. Thr-387 is subject to Phosphothreonine.

This sequence belongs to the band 7/mec-2 family. Flotillin subfamily. As to quaternary structure, heterooligomeric complex of flotillin-1 and flotillin-2 and caveolin-1 and caveolin-2. Interacts with ECPAS.

The protein localises to the cell membrane. The protein resides in the endosome. It localises to the membrane. Its subcellular location is the caveola. It is found in the melanosome. The protein localises to the membrane raft. Its function is as follows. May act as a scaffolding protein within caveolar membranes, functionally participating in formation of caveolae or caveolae-like vesicles. This chain is Flotillin-1 (FLOT1), found in Sus scrofa (Pig).